The primary structure comprises 472 residues: Estrogen receptor beta (472 aa).

A modulating region spans residues 1–104; the sequence is MAFCSPAMMN…NPGSKRDAHF (104 aa). 2 NR C4-type zinc fingers span residues 105–125 and 141–165; these read CAVC…CEGC and CPAT…LRKC. The nuclear receptor DNA-binding region spans 105-170; the sequence is CAVCSDYASG…RLRKCYEVGM (66 aa). An NR LBD domain is found at 217–449; it reads SPEQFVLTLL…DLLLEMLNAH (233 aa).

It belongs to the nuclear hormone receptor family. NR3 subfamily. In terms of assembly, binds DNA as a homodimer. Can form a heterodimer with ER-alpha. In terms of tissue distribution, a high expression is seen in the telencephalon, diencephalon, pituitary, testis and kidneys but little or no expression is seen in the cerebellum, pectoral muscle and adrenal gland.

Its subcellular location is the nucleus. Functionally, binds estrogens with an affinity similar to that of ER-alpha, and activates expression of reporter genes containing estrogen response elements (ERE) in an estrogen-dependent manner. This is Estrogen receptor beta (ESR2) from Coturnix japonica (Japanese quail).